Here is a 317-residue protein sequence, read N- to C-terminus: Protoheme IX farnesyltransferase (317 aa).

A run of 8 helical transmembrane segments spans residues 25–45, 54–74, 126–146, 154–174, 181–201, 227–244, 249–271, and 281–301; these read FFALLKPRVMALVIFTALVGM, PVIAAVSLLMIAVGAGASGCL, LAAGLLAFTIAFYAVIYSMWL, IVIGGAAGALPPMIGQAVVTG, LVLFLIIFVWTPPHFWALALV, IVAYTLLLAPLGLAPVAL, LIYGLVALLGGLAMLALSLQVYH, and AAMGLFGFSILYLFLLFSALL.

This sequence belongs to the UbiA prenyltransferase family. Protoheme IX farnesyltransferase subfamily.

It localises to the cell inner membrane. It carries out the reaction heme b + (2E,6E)-farnesyl diphosphate + H2O = Fe(II)-heme o + diphosphate. The protein operates within porphyrin-containing compound metabolism; heme O biosynthesis; heme O from protoheme: step 1/1. Its function is as follows. Converts heme B (protoheme IX) to heme O by substitution of the vinyl group on carbon 2 of heme B porphyrin ring with a hydroxyethyl farnesyl side group. The protein is Protoheme IX farnesyltransferase of Methylobacterium sp. (strain 4-46).